The primary structure comprises 522 residues: Na(+)/H(+) antiporter NhaB (522 aa).

Helical transmembrane passes span 13–33 (FLGNSPDWYKLAIMGFLIINP), 98–118 (LLLVFMVAGIYFMKQLLLFVF), 140–160 (AFLSAFLDALTVIAVVISVSV), 239–259 (FFIRMLPVTLPVFIFGLLVCL), 304–324 (AIIGVWLVLALHLAEVGLVGL), 356–376 (LTVFFAVVAVIIEQSLFTPII), 390–410 (LFYLFNGLLSSVSDNVFVGTV), 446–466 (ATPNGQAAFLFLLTSALAPLI), and 477–497 (ALPYTLVMTIVGLLGVEFLLV).

The protein belongs to the NhaB Na(+)/H(+) (TC 2.A.34) antiporter family.

The protein resides in the cell inner membrane. It carries out the reaction 2 Na(+)(in) + 3 H(+)(out) = 2 Na(+)(out) + 3 H(+)(in). Its function is as follows. Na(+)/H(+) antiporter that extrudes sodium in exchange for external protons. This Yersinia pestis bv. Antiqua (strain Angola) protein is Na(+)/H(+) antiporter NhaB.